Consider the following 311-residue polypeptide: Acetyl-coenzyme A carboxylase carboxyl transferase subunit alpha (311 aa).

A CoA carboxyltransferase C-terminal domain is found at 36-286 (NLSKEISKVY…ANYFISELAE (251 aa)).

It belongs to the AccA family. Acetyl-CoA carboxylase is a heterohexamer composed of biotin carboxyl carrier protein (AccB), biotin carboxylase (AccC) and two subunits each of ACCase subunit alpha (AccA) and ACCase subunit beta (AccD).

The protein localises to the cytoplasm. It carries out the reaction N(6)-carboxybiotinyl-L-lysyl-[protein] + acetyl-CoA = N(6)-biotinyl-L-lysyl-[protein] + malonyl-CoA. It participates in lipid metabolism; malonyl-CoA biosynthesis; malonyl-CoA from acetyl-CoA: step 1/1. Its function is as follows. Component of the acetyl coenzyme A carboxylase (ACC) complex. First, biotin carboxylase catalyzes the carboxylation of biotin on its carrier protein (BCCP) and then the CO(2) group is transferred by the carboxyltransferase to acetyl-CoA to form malonyl-CoA. The polypeptide is Acetyl-coenzyme A carboxylase carboxyl transferase subunit alpha (Campylobacter concisus (strain 13826)).